Reading from the N-terminus, the 469-residue chain is 3-isopropylmalate dehydratase large subunit (469 aa).

[4Fe-4S] cluster contacts are provided by Cys-347, Cys-410, and Cys-413.

This sequence belongs to the aconitase/IPM isomerase family. LeuC type 1 subfamily. Heterodimer of LeuC and LeuD. The cofactor is [4Fe-4S] cluster.

The catalysed reaction is (2R,3S)-3-isopropylmalate = (2S)-2-isopropylmalate. Its pathway is amino-acid biosynthesis; L-leucine biosynthesis; L-leucine from 3-methyl-2-oxobutanoate: step 2/4. Catalyzes the isomerization between 2-isopropylmalate and 3-isopropylmalate, via the formation of 2-isopropylmaleate. This is 3-isopropylmalate dehydratase large subunit from Cupriavidus pinatubonensis (strain JMP 134 / LMG 1197) (Cupriavidus necator (strain JMP 134)).